The following is a 368-amino-acid chain: Protein-glutamate methylesterase/protein-glutamine glutaminase 2 (368 aa).

Residues 6–123 enclose the Response regulatory domain; it reads KVLLVDDSAV…KEYLESAAGE (118 aa). Aspartate 57 carries the 4-aspartylphosphate modification. The CheB-type methylesterase domain occupies 169–355; sequence IAGANKIAAL…SLERIPQCVL (187 aa). Catalysis depends on residues serine 181, histidine 207, and aspartate 303.

This sequence belongs to the CheB family. Post-translationally, phosphorylated by CheA. Phosphorylation of the N-terminal regulatory domain activates the methylesterase activity.

The protein localises to the cytoplasm. It catalyses the reaction [protein]-L-glutamate 5-O-methyl ester + H2O = L-glutamyl-[protein] + methanol + H(+). The catalysed reaction is L-glutaminyl-[protein] + H2O = L-glutamyl-[protein] + NH4(+). Its function is as follows. Involved in chemotaxis. Part of a chemotaxis signal transduction system that modulates chemotaxis in response to various stimuli. Catalyzes the demethylation of specific methylglutamate residues introduced into the chemoreceptors (methyl-accepting chemotaxis proteins or MCP) by CheR. Also mediates the irreversible deamidation of specific glutamine residues to glutamic acid. This is Protein-glutamate methylesterase/protein-glutamine glutaminase 2 from Hahella chejuensis (strain KCTC 2396).